The chain runs to 367 residues: 2-oxoisovalerate dehydrogenase subunit alpha (367 aa).

Residues Phe-66, Tyr-95, 128–131 (MPEH), and Ser-144 each bind substrate. 94–96 (YYR) is a thiamine diphosphate binding site. Residues 144-146 (SPI), 174-180 (GDGATSE), 204-208 (NFYAI), and His-273 each bind thiamine diphosphate. The Mg(2+) site is built by Asp-175, Asn-204, and Tyr-206.

This sequence belongs to the BCKDHA family. As to quaternary structure, heterotetramer of two alpha and two beta chains. Directly associated with ODBB in the E1 complex. It depends on thiamine diphosphate as a cofactor.

It catalyses the reaction N(6)-[(R)-lipoyl]-L-lysyl-[protein] + 3-methyl-2-oxobutanoate + H(+) = N(6)-[(R)-S(8)-2-methylpropanoyldihydrolipoyl]-L-lysyl-[protein] + CO2. In terms of biological role, the branched-chain alpha-keto dehydrogenase complex catalyzes the overall conversion of alpha-keto acids to acyl-CoA and CO(2). It contains multiple copies of three enzymatic components: branched-chain alpha-keto acid decarboxylase (E1), lipoamide acyltransferase (E2) and lipoamide dehydrogenase (E3). The protein is 2-oxoisovalerate dehydrogenase subunit alpha of Thermus thermophilus (strain ATCC 27634 / DSM 579 / HB8).